Consider the following 407-residue polypeptide: MTKLDPYFGEYGGMYVPQILMPALKQLETAFVEAQEDEAFKTEFNDLLKNYAGRPTALTLTRNLSPNPLVKIYLKREDLLHGGAHKTNQVLGQALLAKRMGKKEIIAETGAGQHGVATALACALLDLKCKVYMGAKDVERQSPNVFRMKLMGAEVIPVTSGSSTLKDACNEAMRDWSGSYDKAHYLLGTAAGPHPFPTIVREFQRMIGAETKKQILEREGRLPDAVIACVGGGSNAIGMFADFIDEESVKLIGVEPAGLGIDTPMHGAPLKHGKTGIFFGMKAPLMQDREGQIEESYSISAGLDFPSVGPQHAHLAATGRATYESATDDEALEAFQLLARSEGIIPALESAHALAYAVKMAKAATQETILVVNLSGRGDKDIFTVADILEERERSQTGQQKEESGND.

Lys-86 carries the N6-(pyridoxal phosphate)lysine modification.

This sequence belongs to the TrpB family. In terms of assembly, tetramer of two alpha and two beta chains. Pyridoxal 5'-phosphate is required as a cofactor.

The catalysed reaction is (1S,2R)-1-C-(indol-3-yl)glycerol 3-phosphate + L-serine = D-glyceraldehyde 3-phosphate + L-tryptophan + H2O. It participates in amino-acid biosynthesis; L-tryptophan biosynthesis; L-tryptophan from chorismate: step 5/5. Functionally, the beta subunit is responsible for the synthesis of L-tryptophan from indole and L-serine. This chain is Tryptophan synthase beta chain, found in Shewanella woodyi (strain ATCC 51908 / MS32).